Here is a 1076-residue protein sequence, read N- to C-terminus: Regulator of G-protein signaling protein-like (1076 aa).

Residues 645 to 764 (NLTEVLLNTQ…LFPPHHQEVE (120 aa)) enclose the RGS domain. Over residues 834–852 (TTAHNTSGRSAPPSTNVRS) the composition is skewed to polar residues. A disordered region spans residues 834–854 (TTAHNTSGRSAPPSTNVRSAD). A helical transmembrane segment spans residues 960–982 (VFHGAIMSVFPVVMYFWKRFCFW).

The protein resides in the membrane. The sequence is that of Regulator of G-protein signaling protein-like (RGSL1) from Homo sapiens (Human).